Consider the following 116-residue polypeptide: Small ribosomal subunit protein uS13 (116 aa).

Residues 92 to 116 (RRGLPVRGQNTKNNARTRKGAKRSR) form a disordered region. The span at 106 to 116 (ARTRKGAKRSR) shows a compositional bias: basic residues.

It belongs to the universal ribosomal protein uS13 family. In terms of assembly, part of the 30S ribosomal subunit. Forms a loose heterodimer with protein S19. Forms two bridges to the 50S subunit in the 70S ribosome.

Functionally, located at the top of the head of the 30S subunit, it contacts several helices of the 16S rRNA. In the 70S ribosome it contacts the 23S rRNA (bridge B1a) and protein L5 of the 50S subunit (bridge B1b), connecting the 2 subunits; these bridges are implicated in subunit movement. Contacts the tRNAs in the A and P-sites. The chain is Small ribosomal subunit protein uS13 from Lactobacillus delbrueckii subsp. bulgaricus (strain ATCC 11842 / DSM 20081 / BCRC 10696 / JCM 1002 / NBRC 13953 / NCIMB 11778 / NCTC 12712 / WDCM 00102 / Lb 14).